The primary structure comprises 1409 residues: DNA-directed RNA polymerase subunit beta' (1409 aa).

The Zn(2+) site is built by cysteine 70, cysteine 72, cysteine 85, and cysteine 88. Residues aspartate 458, aspartate 460, and aspartate 462 each coordinate Mg(2+). The Zn(2+) site is built by cysteine 813, cysteine 887, cysteine 894, and cysteine 897. The segment covering 1385–1403 has biased composition (low complexity); the sequence is EAAELAGSTSDVSTTADAS. A disordered region spans residues 1385-1409; it reads EAAELAGSTSDVSTTADASEGAASE.

This sequence belongs to the RNA polymerase beta' chain family. As to quaternary structure, the RNAP catalytic core consists of 2 alpha, 1 beta, 1 beta' and 1 omega subunit. When a sigma factor is associated with the core the holoenzyme is formed, which can initiate transcription. It depends on Mg(2+) as a cofactor. The cofactor is Zn(2+).

It carries out the reaction RNA(n) + a ribonucleoside 5'-triphosphate = RNA(n+1) + diphosphate. Its function is as follows. DNA-dependent RNA polymerase catalyzes the transcription of DNA into RNA using the four ribonucleoside triphosphates as substrates. The protein is DNA-directed RNA polymerase subunit beta' of Variovorax paradoxus (strain S110).